Reading from the N-terminus, the 217-residue chain is Adenylate kinase (217 aa).

Residue 10-15 (GGGKGT) coordinates ATP. The tract at residues 30–59 (STGDMLRAAVASGSEVGKKAKAVMDAGQLV) is NMP. Residues threonine 31, arginine 36, 57–59 (QLV), 85–88 (GFPR), and glutamine 92 each bind AMP. An LID region spans residues 126 to 164 (GRYTCAKCGAGYHDKFQLPQVAGKCDSCGGTEFARRPDD). Arginine 127 is a binding site for ATP. Positions 130, 133, 150, and 153 each coordinate Zn(2+). Residues arginine 161 and arginine 172 each coordinate AMP. Methionine 200 contacts ATP.

The protein belongs to the adenylate kinase family. As to quaternary structure, monomer.

Its subcellular location is the cytoplasm. The enzyme catalyses AMP + ATP = 2 ADP. It participates in purine metabolism; AMP biosynthesis via salvage pathway; AMP from ADP: step 1/1. Catalyzes the reversible transfer of the terminal phosphate group between ATP and AMP. Plays an important role in cellular energy homeostasis and in adenine nucleotide metabolism. This chain is Adenylate kinase, found in Paramagnetospirillum magneticum (strain ATCC 700264 / AMB-1) (Magnetospirillum magneticum).